Reading from the N-terminus, the 376-residue chain is Deoxyuridine 5'-triphosphate nucleotidohydrolase (376 aa).

It belongs to the dUTPase family. The cofactor is Mg(2+).

It carries out the reaction dUTP + H2O = dUMP + diphosphate + H(+). Its function is as follows. Involved in nucleotide metabolism: produces dUMP, the immediate precursor of thymidine nucleotides and decreases the intracellular concentration of dUTP to avoid uracil incorporation into viral DNA. This is Deoxyuridine 5'-triphosphate nucleotidohydrolase from Human herpesvirus 6B (strain Z29) (HHV-6 variant B).